We begin with the raw amino-acid sequence, 1032 residues long: uncharacterized protein (1032 aa).

Disordered regions lie at residues 54-80, 391-451, and 884-934; these read NNNN…NNNN, QLQI…QTHL, and INNE…SKVK. Residues 884 to 907 show a composition bias toward low complexity; it reads INNENNNENNNNYNGNINSNNNNN.

This is an uncharacterized protein from Dictyostelium discoideum (Social amoeba).